The chain runs to 292 residues: Tetratricopeptide repeat protein 1 (292 aa).

A disordered region spans residues 20-125 (TDPQEAECLH…SSRLKEEGNE (106 aa)). Composition is skewed to basic and acidic residues over residues 36–49 (KEQH…KDVD) and 75–85 (GADKLENKPED). A compositionally biased stretch (acidic residues) spans 86 to 98 (DMNPSELDEEYLM). Residue Ser-90 is modified to Phosphoserine. Residues 99 to 125 (ELEKNMPDEEKKRRREESSRLKEEGNE) show a composition bias toward basic and acidic residues. TPR repeat units follow at residues 116–149 (SSRL…CPSC), 155–188 (SVLF…NPSY), and 189–222 (IRAI…DPSV).

In terms of assembly, interacts with the GAP domain of NF1. Interacts (via TPR repeats) with HSP90AA1 and HSPA8.

The chain is Tetratricopeptide repeat protein 1 (TTC1) from Bos taurus (Bovine).